A 217-amino-acid chain; its full sequence is Peroxiredoxin (217 aa).

The Thioredoxin domain occupies valine 2–threonine 159. The Cysteine sulfenic acid (-SOH) intermediate role is filled by cysteine 46. Residue arginine 122 participates in substrate binding.

The protein belongs to the peroxiredoxin family. Prx6 subfamily. Homodecamer. Pentamer of dimers that assemble into a ring structure.

It is found in the cytoplasm. The enzyme catalyses a hydroperoxide + [thioredoxin]-dithiol = an alcohol + [thioredoxin]-disulfide + H2O. In terms of biological role, thiol-specific peroxidase that catalyzes the reduction of hydrogen peroxide and organic hydroperoxides to water and alcohols, respectively. Plays a role in cell protection against oxidative stress by detoxifying peroxides. In Methanococcus maripaludis (strain DSM 14266 / JCM 13030 / NBRC 101832 / S2 / LL), this protein is Peroxiredoxin.